The following is a 229-amino-acid chain: Molybdenum transport system permease protein ModB (229 aa).

The Periplasmic portion of the chain corresponds to 1-16; the sequence is MILTDPEWQAVLLSLK. Residues 11–219 form the ABC transmembrane type-1 domain; it reads VLLSLKVSSL…MISLLISEWL (209 aa). Residues 17–37 traverse the membrane as a helical segment; the sequence is VSSLAVLFSLPFGIFFAWLLV. Residues 38–49 are Cytoplasmic-facing; it reads RCTFPGKALLDS. Residues 50–70 traverse the membrane as a helical segment; that stretch reads VLHLPLVLPPVVVGYLLLVSM. Topologically, residues 71–83 are periplasmic; sequence GRRGFIGERLYDW. Residues 84-104 traverse the membrane as a helical segment; the sequence is FGITFAFSWRGAVLAAAVMSF. At 105 to 136 the chain is on the cytoplasmic side; it reads PLMVRAIRLALEGVDVKLEQAARTLGAGRWRV. Residues 137 to 157 form a helical membrane-spanning segment; sequence FFTITLPLTLPGIIVGTVLAF. At 158–201 the chain is on the periplasmic side; that stretch reads ARSLGEFGATITFVSNIPGETRTIPSAMYTLIQTPGGESGAARL. Residues 202 to 222 form a helical membrane-spanning segment; sequence CIISIALAMISLLISEWLARI. Residues 223–229 are Cytoplasmic-facing; sequence SRERAGR.

It belongs to the binding-protein-dependent transport system permease family. CysTW subfamily.

The protein localises to the cell inner membrane. In terms of biological role, part of the binding-protein-dependent transport system for molybdenum; probably responsible for the translocation of the substrate across the membrane. The chain is Molybdenum transport system permease protein ModB (modB) from Escherichia coli O157:H7.